Here is a 495-residue protein sequence, read N- to C-terminus: Lysine--tRNA ligase (495 aa).

Mg(2+) contacts are provided by Glu-406 and Glu-413.

It belongs to the class-II aminoacyl-tRNA synthetase family. As to quaternary structure, homodimer. The cofactor is Mg(2+).

The protein localises to the cytoplasm. It carries out the reaction tRNA(Lys) + L-lysine + ATP = L-lysyl-tRNA(Lys) + AMP + diphosphate. The protein is Lysine--tRNA ligase of Staphylococcus aureus (strain MRSA252).